The chain runs to 366 residues: Chorismate synthase (366 aa).

Arg46 lines the NADP(+) pocket. FMN contacts are provided by residues 122 to 124 (RSS), 243 to 244 (NG), Gly284, 299 to 303 (KPTPS), and Arg325.

It belongs to the chorismate synthase family. In terms of assembly, homotetramer. The cofactor is FMNH2.

It catalyses the reaction 5-O-(1-carboxyvinyl)-3-phosphoshikimate = chorismate + phosphate. Its pathway is metabolic intermediate biosynthesis; chorismate biosynthesis; chorismate from D-erythrose 4-phosphate and phosphoenolpyruvate: step 7/7. In terms of biological role, catalyzes the anti-1,4-elimination of the C-3 phosphate and the C-6 proR hydrogen from 5-enolpyruvylshikimate-3-phosphate (EPSP) to yield chorismate, which is the branch point compound that serves as the starting substrate for the three terminal pathways of aromatic amino acid biosynthesis. This reaction introduces a second double bond into the aromatic ring system. The protein is Chorismate synthase of Campylobacter hominis (strain ATCC BAA-381 / DSM 21671 / CCUG 45161 / LMG 19568 / NCTC 13146 / CH001A).